A 216-amino-acid chain; its full sequence is Protein Syd (216 aa).

The protein belongs to the Syd family.

It is found in the cell inner membrane. Its function is as follows. Interacts with the SecY protein in vivo. May bind preferentially to an uncomplexed state of SecY, thus functioning either as a chelating agent for excess SecY in the cell or as a regulatory factor that negatively controls the translocase function. The chain is Protein Syd from Shewanella baltica (strain OS155 / ATCC BAA-1091).